Reading from the N-terminus, the 53-residue chain is Conotoxin Cal6.27 (53 aa).

The signal sequence occupies residues 1-24; sequence MKLTCVLIAAMLLLAVCQLDSADA. Disulfide bonds link Cys-29–Cys-43, Cys-36–Cys-47, and Cys-42–Cys-51.

This sequence belongs to the conotoxin O1 superfamily. In terms of tissue distribution, expressed by the venom duct.

The protein localises to the secreted. Its function is as follows. Probable neurotoxin. The protein is Conotoxin Cal6.27 of Californiconus californicus (California cone).